The chain runs to 79 residues: Cell division protein ZapB (79 aa).

A coiled-coil region spans residues 3–79; the sequence is LEVFEKLEAK…QALLGRMEEV (77 aa). A compositionally biased stretch (polar residues) spans 36 to 45; sequence SLTQEVQSAQ. Residues 36 to 63 are disordered; that stretch reads SLTQEVQSAQHQREELERENNSLKEQQS. The span at 46–57 shows a compositional bias: basic and acidic residues; the sequence is HQREELERENNS.

It belongs to the ZapB family. In terms of assembly, homodimer. The ends of the coiled-coil dimer bind to each other, forming polymers. Interacts with FtsZ.

It localises to the cytoplasm. Its function is as follows. Non-essential, abundant cell division factor that is required for proper Z-ring formation. It is recruited early to the divisome by direct interaction with FtsZ, stimulating Z-ring assembly and thereby promoting cell division earlier in the cell cycle. Its recruitment to the Z-ring requires functional FtsA or ZipA. The sequence is that of Cell division protein ZapB from Salmonella agona (strain SL483).